The following is an 81-amino-acid chain: Apolipoprotein C-I, acidic form (81 aa).

The signal sequence occupies residues 1-24 (MRLFLSLLVVVLSMVLKGPTPAQG).

This sequence belongs to the apolipoprotein C1 family.

It localises to the secreted. The sequence is that of Apolipoprotein C-I, acidic form (APOC1A) from Macaca fascicularis (Crab-eating macaque).